A 47-amino-acid polypeptide reads, in one-letter code: Large ribosomal subunit protein bL34 (47 aa).

The protein belongs to the bacterial ribosomal protein bL34 family.

The protein is Large ribosomal subunit protein bL34 of Mycobacterium ulcerans (strain Agy99).